A 389-amino-acid chain; its full sequence is Probable peptide chain release factor 1, mitochondrial (389 aa).

At Gln259 the chain carries N5-methylglutamine.

It belongs to the prokaryotic/mitochondrial release factor family. Methylation of glutamine in the GGQ triplet is conserved from bacteria to mammals.

The protein localises to the mitochondrion. Mitochondrial peptide chain release factor that directs the termination of translation in response to the peptide chain termination codons UAA and UAG. In Caenorhabditis elegans, this protein is Probable peptide chain release factor 1, mitochondrial.